A 359-amino-acid polypeptide reads, in one-letter code: Peptide chain release factor 1 (359 aa).

An N5-methylglutamine modification is found at Gln-233.

Belongs to the prokaryotic/mitochondrial release factor family. In terms of processing, methylated by PrmC. Methylation increases the termination efficiency of RF1.

The protein localises to the cytoplasm. Peptide chain release factor 1 directs the termination of translation in response to the peptide chain termination codons UAG and UAA. In Ruminiclostridium cellulolyticum (strain ATCC 35319 / DSM 5812 / JCM 6584 / H10) (Clostridium cellulolyticum), this protein is Peptide chain release factor 1.